A 233-amino-acid polypeptide reads, in one-letter code: Ribonuclease 3 (233 aa).

The 130-residue stretch at Q6 to G135 folds into the RNase III domain. Mg(2+) is bound at residue E48. D52 is a catalytic residue. Mg(2+) is bound by residues D121 and E124. E124 is a catalytic residue. The DRBM domain occupies D161–N230. The segment at I205 to K233 is disordered.

The protein belongs to the ribonuclease III family. In terms of assembly, homodimer. It depends on Mg(2+) as a cofactor.

It localises to the cytoplasm. It carries out the reaction Endonucleolytic cleavage to 5'-phosphomonoester.. In terms of biological role, digests double-stranded RNA. Involved in the processing of primary rRNA transcript to yield the immediate precursors to the large and small rRNAs (23S and 16S). Processes some mRNAs, and tRNAs when they are encoded in the rRNA operon. Processes pre-crRNA and tracrRNA of type II CRISPR loci if present in the organism. The chain is Ribonuclease 3 from Limosilactobacillus reuteri (strain DSM 20016) (Lactobacillus reuteri).